The sequence spans 544 residues: NADH-quinone oxidoreductase subunit C/D (544 aa).

The interval 1 to 138 is NADH dehydrogenase I subunit C; it reads MLNCDMLIDS…KGQICTETED (138 aa). The interval 161–544 is NADH dehydrogenase I subunit D; the sequence is MLLNVGPSHP…MNFIAGEFDR (384 aa).

The protein in the N-terminal section; belongs to the complex I 30 kDa subunit family. It in the C-terminal section; belongs to the complex I 49 kDa subunit family. NDH-1 is composed of 13 different subunits. Subunits NuoB, CD, E, F, and G constitute the peripheral sector of the complex.

Its subcellular location is the cell inner membrane. It carries out the reaction a quinone + NADH + 5 H(+)(in) = a quinol + NAD(+) + 4 H(+)(out). NDH-1 shuttles electrons from NADH, via FMN and iron-sulfur (Fe-S) centers, to quinones in the respiratory chain. The immediate electron acceptor for the enzyme in this species is believed to be ubiquinone. Couples the redox reaction to proton translocation (for every two electrons transferred, four hydrogen ions are translocated across the cytoplasmic membrane), and thus conserves the redox energy in a proton gradient. The polypeptide is NADH-quinone oxidoreductase subunit C/D (Aliarcobacter butzleri (strain RM4018) (Arcobacter butzleri)).